The following is a 127-amino-acid chain: Ribonuclease P protein component (127 aa).

This sequence belongs to the RnpA family. Consists of a catalytic RNA component (M1 or rnpB) and a protein subunit.

It carries out the reaction Endonucleolytic cleavage of RNA, removing 5'-extranucleotides from tRNA precursor.. RNaseP catalyzes the removal of the 5'-leader sequence from pre-tRNA to produce the mature 5'-terminus. It can also cleave other RNA substrates such as 4.5S RNA. The protein component plays an auxiliary but essential role in vivo by binding to the 5'-leader sequence and broadening the substrate specificity of the ribozyme. The protein is Ribonuclease P protein component of Synechococcus sp. (strain RCC307).